Consider the following 396-residue polypeptide: L-cysteine desulfidase (396 aa).

Catalysis depends on C23, which acts as the Proton acceptor. C287, C329, and C336 together coordinate [4Fe-4S] cluster.

It belongs to the L-cysteine desulfidase family. In terms of assembly, homotrimer. The cofactor is [4Fe-4S] cluster.

The catalysed reaction is L-cysteine + H2O = hydrogen sulfide + pyruvate + NH4(+) + H(+). Functionally, catalyzes the cleavage of L-cysteine to form 2-aminoprop-2-enoate and sulfide. The former then spontaneously hydrolyzes to pyruvate and NH(3). May be responsible for the production of sulfide required for the biosynthesis of iron-sulfur centers in this archaea. The sequence is that of L-cysteine desulfidase from Methanococcus maripaludis (strain DSM 14266 / JCM 13030 / NBRC 101832 / S2 / LL).